The primary structure comprises 297 residues: Glycerol-3-phosphate dehydrogenase [NAD(P)+] (297 aa).

NADPH is bound by residues W11, R33, and K79. Residues K79, G107, and S109 each contribute to the sn-glycerol 3-phosphate site. A111 contributes to the NADPH binding site. Residues K161, D214, S224, R225, and N226 each contribute to the sn-glycerol 3-phosphate site. The active-site Proton acceptor is K161. Position 225 (R225) interacts with NADPH. The NADPH site is built by V249 and E251.

It belongs to the NAD-dependent glycerol-3-phosphate dehydrogenase family.

The protein resides in the cytoplasm. The enzyme catalyses sn-glycerol 3-phosphate + NAD(+) = dihydroxyacetone phosphate + NADH + H(+). The catalysed reaction is sn-glycerol 3-phosphate + NADP(+) = dihydroxyacetone phosphate + NADPH + H(+). Its pathway is membrane lipid metabolism; glycerophospholipid metabolism. Catalyzes the reduction of the glycolytic intermediate dihydroxyacetone phosphate (DHAP) to sn-glycerol 3-phosphate (G3P), the key precursor for phospholipid synthesis. The chain is Glycerol-3-phosphate dehydrogenase [NAD(P)+] from Campylobacter jejuni subsp. jejuni serotype O:6 (strain 81116 / NCTC 11828).